The primary structure comprises 319 residues: RNA exonuclease 4 (319 aa).

Positions 1 to 75 (MAALSSNWKK…GGVHSSKIEE (75 aa)) are disordered. An Exonuclease domain is found at 132–293 (KYIAIDCEMV…FRKHKSAFDV (162 aa)). Positions 295-319 (HANRYAPKTASGGGQKGNKPKKKKK) are disordered.

It belongs to the REXO4 family.

It localises to the nucleus. Functionally, exoribonuclease involved in ribosome biosynthesis. Involved in the processing of ITS1, the internal transcribed spacer localized between the 18S and 5.8S rRNAs. The polypeptide is RNA exonuclease 4 (REX4) (Gibberella zeae (strain ATCC MYA-4620 / CBS 123657 / FGSC 9075 / NRRL 31084 / PH-1) (Wheat head blight fungus)).